The sequence spans 92 residues: Small ribosomal subunit protein bS18 (92 aa).

Residues 1–28 are disordered; it reads MTQQGNSGERKPRGKGPKRPRKPKVDPF. A compositionally biased stretch (basic residues) spans 12–22; the sequence is PRGKGPKRPRK.

The protein belongs to the bacterial ribosomal protein bS18 family. In terms of assembly, part of the 30S ribosomal subunit. Forms a tight heterodimer with protein bS6.

In terms of biological role, binds as a heterodimer with protein bS6 to the central domain of the 16S rRNA, where it helps stabilize the platform of the 30S subunit. This is Small ribosomal subunit protein bS18 from Deinococcus radiodurans (strain ATCC 13939 / DSM 20539 / JCM 16871 / CCUG 27074 / LMG 4051 / NBRC 15346 / NCIMB 9279 / VKM B-1422 / R1).